The primary structure comprises 157 residues: AKNNQQSGKSQSIVVGTWGAEVTSGVAFDDGSYTGIREINFEYNNETAIGSIQVTYDVDGTPFEAKKHASFITGFTPVKISLDFPSEYIVEVSGYTGKVSGYLVVRSLTFKTNKETYGPYGVTSGTHFKLPIQDGLIVGFKGSVGYWLDYIGFHLAL.

Residues 12–157 (SIVVGTWGAE…LDYIGFHLAL (146 aa)) enclose the Jacalin-type lectin domain. Residue N45 is glycosylated (N-linked (GlcNAc...) asparagine).

It belongs to the jacalin lectin family. As to quaternary structure, tetramer of heterodimers of light and heavy chains which are non-covalently linked. In terms of processing, N-linked carbohydrates at Asn-45 can be of complex or paucimannose type.

Its function is as follows. Alpha-D-galactose-specific lectin. Has hemagglutinating activity towards human and rabbit erythrocytes. Is highly cytotoxic to human cells in vitro. The protein is Galactose-specific lectin of Morus indica (Mulberry).